Here is a 460-residue protein sequence, read N- to C-terminus: Argininosuccinate lyase (460 aa).

The protein belongs to the lyase 1 family. Argininosuccinate lyase subfamily.

The protein localises to the cytoplasm. The enzyme catalyses 2-(N(omega)-L-arginino)succinate = fumarate + L-arginine. It functions in the pathway amino-acid biosynthesis; L-arginine biosynthesis; L-arginine from L-ornithine and carbamoyl phosphate: step 3/3. This chain is Argininosuccinate lyase, found in Parvibaculum lavamentivorans (strain DS-1 / DSM 13023 / NCIMB 13966).